The primary structure comprises 222 residues: Octanoyltransferase (222 aa).

The 176-residue stretch at 35–210 (ETTPDELWLV…EFVHLLGYPK (176 aa)) folds into the BPL/LPL catalytic domain. Residues 74-81 (RGGQVTYH), 141-143 (SLG), and 154-156 (GLA) each bind substrate. Catalysis depends on Cys172, which acts as the Acyl-thioester intermediate.

It belongs to the LipB family.

It is found in the cytoplasm. The catalysed reaction is octanoyl-[ACP] + L-lysyl-[protein] = N(6)-octanoyl-L-lysyl-[protein] + holo-[ACP] + H(+). Its pathway is protein modification; protein lipoylation via endogenous pathway; protein N(6)-(lipoyl)lysine from octanoyl-[acyl-carrier-protein]: step 1/2. In terms of biological role, catalyzes the transfer of endogenously produced octanoic acid from octanoyl-acyl-carrier-protein onto the lipoyl domains of lipoate-dependent enzymes. Lipoyl-ACP can also act as a substrate although octanoyl-ACP is likely to be the physiological substrate. The polypeptide is Octanoyltransferase (Serratia proteamaculans (strain 568)).